Here is a 73-residue protein sequence, read N- to C-terminus: Large ribosomal subunit protein uL24 (73 aa).

Positions 51 to 65 are enriched in basic and acidic residues; the sequence is DDNPKGGFIHKEKPM. Residues 51–73 are disordered; the sequence is DDNPKGGFIHKEKPMHISNVKKA.

The protein belongs to the universal ribosomal protein uL24 family. Part of the 50S ribosomal subunit.

In terms of biological role, one of two assembly initiator proteins, it binds directly to the 5'-end of the 23S rRNA, where it nucleates assembly of the 50S subunit. Functionally, one of the proteins that surrounds the polypeptide exit tunnel on the outside of the subunit. This Helicobacter acinonychis (strain Sheeba) protein is Large ribosomal subunit protein uL24.